The following is a 305-amino-acid chain: Tyrosine recombinase XerC (305 aa).

The Core-binding (CB) domain maps to 4-95 (TSIQALINKW…AVKNFYRFLE (92 aa)). The Tyr recombinase domain occupies 116–298 (LLPKALSEDD…SIKHLEAVYT (183 aa)). Catalysis depends on residues Arg159, Lys182, His250, Arg253, and His276. Tyr285 (O-(3'-phospho-DNA)-tyrosine intermediate) is an active-site residue.

It belongs to the 'phage' integrase family. XerC subfamily. In terms of assembly, forms a cyclic heterotetrameric complex composed of two molecules of XerC and two molecules of XerD.

It localises to the cytoplasm. Site-specific tyrosine recombinase, which acts by catalyzing the cutting and rejoining of the recombining DNA molecules. The XerC-XerD complex is essential to convert dimers of the bacterial chromosome into monomers to permit their segregation at cell division. It also contributes to the segregational stability of plasmids. This chain is Tyrosine recombinase XerC, found in Rickettsia peacockii (strain Rustic).